The primary structure comprises 162 residues: UPF0114 protein Shewmr4_0646 (162 aa).

The next 4 membrane-spanning stretches (helical) occupy residues I15–F35, L53–V73, K108–V128, and I136–L156.

This sequence belongs to the UPF0114 family.

It localises to the cell membrane. The polypeptide is UPF0114 protein Shewmr4_0646 (Shewanella sp. (strain MR-4)).